Consider the following 367-residue polypeptide: Aldo-keto reductase AMT2 (367 aa).

Asp76 lines the NADP(+) pocket. The active-site Proton donor is Tyr81. A substrate-binding site is contributed by His173. NADP(+) is bound by residues 203–204, Gln229, 258–268, and 330–338; these read SS, GPLAAGKLARP, and SSVERMDEV. Residues 346-367 are disordered; sequence LSDEEESRLEDPYKAQPPQGHS.

This sequence belongs to the aldo/keto reductase family.

The protein operates within mycotoxin biosynthesis. Functionally, aldo-keto reductase; part of the gene clusters that mediate the biosynthesis of AM-toxins, host-selective toxins (HSTs) causing Alternaria blotch on apple, a worldwide distributed disease. AM-toxins are cyclic depsipeptides containing the 3 residues 2-hydroxy-isovaleric acid (2-HIV), dehydroalanine, L-alanine which are common for all 3 AM-toxins I to III. The fourth precursor is L-alpha-amino-methoxyphenyl-valeric acid (L-Amv) for AM-toxin I, L-alpha-amino-phenyl-valeric acid (L-Apv) for AM-toxin II, and L-alpha-amino-hydroxyphenyl-valeric acid (L-Ahv) for AM-toxin III. AM-toxins have two target sites for affecting susceptible apple cells; they cause invagination of the plasma membrane and electrolyte loss and chloroplast disorganization. The non-ribosomal peptide synthetase AMT1 contains 4 catalytic modules and is responsible for activation of each residue in AM-toxin. The aldo-keto reductase AMT2 catalyzes the conversion of 2-keto-isovaleric acid (2-KIV) to 2-hydroxy-isovaleric acid (2-HIV), one of the precursor residues incorporated by AMT1 during AM-toxin biosynthesis, by reduction of its ketone to an alcohol. The cytochrome P450 monooxygenase AMT3 and the thioesterase AMT4 are also important for AM-toxin production, but their exact function within the AM-toxin biosynthesis are not known yet. Up to 21 proteins (including AMT1 to AMT4) are predicted to be involved in AM-toxin biosynthesis since their expression ishighly up-regulated in AM-toxin-producing cultures. This is Aldo-keto reductase AMT2 from Alternaria alternata (Alternaria rot fungus).